The following is a 707-amino-acid chain: Protein kinase C-like 1B (707 aa).

Positions 1–114 (MLFTGTVRVR…KIGSANDIWV (114 aa)) constitute a C2 domain. Phorbol-ester/DAG-type zinc fingers lie at residues 170 to 220 (GHKF…VWKC) and 248 to 298 (PHRF…ANNC). The tract at residues 323-368 (SKKKPSIMTDTSTDISGSSNSENSGYLQQISEDDSGTTSSRSASKV) is disordered. The span at 330 to 365 (MTDTSTDISGSSNSENSGYLQQISEDDSGTTSSRSA) shows a compositional bias: polar residues. Residues 378 to 638 (FTFMKVLGKG…EDAIRAHPFF (261 aa)) form the Protein kinase domain. ATP is bound by residues 384-392 (LGKGSFGKV) and K407. D502 functions as the Proton acceptor in the catalytic mechanism. In terms of domain architecture, AGC-kinase C-terminal spans 639-707 (REIDWDALES…FSFINPHFTY (69 aa)).

This sequence belongs to the protein kinase superfamily. AGC Ser/Thr protein kinase family. PKC subfamily. In terms of tissue distribution, expressed selectively in neurons that receive, transmit and process environmental signals.

It is found in the membrane. The protein resides in the cytoplasm. The protein localises to the cytoskeleton. It carries out the reaction L-seryl-[protein] + ATP = O-phospho-L-seryl-[protein] + ADP + H(+). The enzyme catalyses L-threonyl-[protein] + ATP = O-phospho-L-threonyl-[protein] + ADP + H(+). Its function is as follows. PKC is activated by diacylglycerol which in turn phosphorylates a range of cellular proteins. PKC also serves as the receptor for phorbol esters, a class of tumor promoters. Involved in neuropeptide secretion in motor axons. Likely to act via the extracellular signal-regulated kinase/mitogen-activated protein kinase (ERK/MAPK) pathway in the signaling response to various sensory neurons; temperature, odor, taste, and osmolality. Its role in regulation differs depending on the neuron in which it is acting; thermosensation in AFD neurons, osmolality in ASH neurons, olfactory perception in AWA and AWC neurons. Promotes dauer formation mediated by the insulin/IGF pathway. Required for resistance to antimitotic toxins. The protein is Protein kinase C-like 1B of Caenorhabditis elegans.